Consider the following 451-residue polypeptide: Epi-neemfruitin B 7-O-acetyltransferse L7AT (451 aa).

Residues His165 and Asp384 each act as proton acceptor in the active site.

The protein belongs to the plant acyltransferase family. As to quaternary structure, monomer. In terms of tissue distribution, mainly expressed in petioles and, to a lower extent, in roots.

The enzyme catalyses epi-neemfruitin B + acetyl-CoA = 7-acetyl-epi-neemfruitin B + CoA. It participates in secondary metabolite biosynthesis; terpenoid biosynthesis. Acetyltransferase involved in the biosynthesis of limonoids triterpene natural products such as azadirachtin, an antifeedant widely used as bioinsecticide, and possessing many medicinal applications including anti-tumoral, anti-malarial, anti-rheumatic, antibacterial, anti-inflammatory, anti-pyretic and diuretic effects. Catalyzes the formation of 7-acetyl-epi-neemfruitin B from epi-neemfruitin B. In Melia azedarach (Chinaberry tree), this protein is Epi-neemfruitin B 7-O-acetyltransferse L7AT.